We begin with the raw amino-acid sequence, 155 residues long: Small ribosomal subunit protein uS7c (155 aa).

The protein belongs to the universal ribosomal protein uS7 family. Part of the 30S ribosomal subunit.

It is found in the plastid. Its subcellular location is the chloroplast. One of the primary rRNA binding proteins, it binds directly to 16S rRNA where it nucleates assembly of the head domain of the 30S subunit. This is Small ribosomal subunit protein uS7c (rps7) from Cedrus deodara (Deodar cedar).